Reading from the N-terminus, the 459-residue chain is MFS-type transporter SLC18B1 (459 aa).

N-acetylmethionine is present on Met1. Residues 1–10 (MDEAGSPAPA) are compositionally biased toward low complexity. The interval 1–27 (MDEAGSPAPAGTGGGDDPGGSTRETSR) is disordered. Residues 1–33 (MDEAGSPAPAGTGGGDDPGGSTRETSRRLSREQ) are Cytoplasmic-facing. Residue Ser21 is modified to Phosphoserine. A helical transmembrane segment spans residues 34 to 54 (IFVLVSAASMNLGCMMTYSIL). The Extracellular segment spans residues 55 to 70 (GPFFPKEAEKKGASNT). Residues 71-91 (MIGMIFGCYALFELLASLVFG) traverse the membrane as a helical segment. Residues 92 to 100 (KYLVHIGAK) are Cytoplasmic-facing. Residues 101 to 121 (FMFIAGMFVSGGVTILFGVLD) traverse the membrane as a helical segment. Residues 122-127 (QLPEGP) are Extracellular-facing. The helical transmembrane segment at 128–148 (IFIAMCFLVRIVDAIGFGAAI) threads the bilayer. The Cytoplasmic segment spans residues 149-167 (TASSSILAKAFPNNVATVM). A helical transmembrane segment spans residues 168-188 (GSLEVFSGLGLVAGPPLGGLL). Topologically, residues 189–195 (YQSFGYE) are extracellular. The chain crosses the membrane as a helical span at residues 196 to 216 (VPFIFLGCIVLLMIPLNLYIL). The Cytoplasmic segment spans residues 217–235 (PSYAQESDPGKQSFWKLVT). A helical membrane pass occupies residues 236 to 256 (LPKMGLLAFVIISLSSCFGFL). Over 257–274 (DPTLSLFVMEKFSLSTGY) the chain is Extracellular. Residues 275–295 (VGLVFLGLSLSYAISSPLFGL) traverse the membrane as a helical segment. Residues 296 to 306 (LSDKMPTLRKW) lie on the Cytoplasmic side of the membrane. A helical membrane pass occupies residues 307–327 (LLVFGNLITAGCYMLLGPVPL). Topologically, residues 328–333 (LHIKSQ) are extracellular. The helical transmembrane segment at 334–354 (LWLLVLVLVVNGISAGMSIIP) threads the bilayer. Topologically, residues 355 to 379 (TFPEMLSCAYANGFEDSISTLGLVS) are cytoplasmic. Residues 380–400 (GLFGAMWSVGAFMGPILGGFL) traverse the membrane as a helical segment. Over 401 to 409 (CEKIGFEWA) the chain is Extracellular. The helical transmembrane segment at 410–430 (AAMQGLWTLLSGVSMALFYLW) threads the bilayer. The Cytoplasmic segment spans residues 431–459 (EDSTARRRSKAQNSLGTEEERAALLPNDT). The interval 440-459 (KAQNSLGTEEERAALLPNDT) is disordered.

The protein belongs to the major facilitator superfamily. As to expression, widely expressed, with highest expression in the lung, pancreas and kidney. High expression in the CNS, particularly in the hypothalamus, the thalamus and the cerebellum. In the forebrain, abundantly expressed in the telencephalon, especially in the cerebral cortex layers, except layer 1, as well as in the induseum griseum, the piriform area, the taenia tecta, dorsal part and in the entorhinal area, lateral part. Lower levels in the bed anterior olfactory nucleus, posteroventral part and in layer two of the olfactory tubercle. In the amygdala, high levels observed in the intercalated nucleus and the medial nucleus. In the diencephalon, expressed in the nuclei in both the hypothalamus and thalamus. Among the hypothalamic areas, strongest expression in the arcuate nucleus and in the ventromedial nucleus, as well as in the suprachiasmatic nucleus, anterior nucleus, especially in its central part, and in the magnocellular division of the paraventricular nucleus. In the thalamus, highest levels in the medial habenula. Expression also observed in the paraventricular thalamic nucleus, parataenial nucleus, central medial nucleus, intermediodorsal nucleus and lateral dorsal nucleus. In the hindbrain, detected in the cerebellum and in the pons. In the midbrain and the medulla, expression levels were modest. In the midbrain, highest expression in the periaqueductal gray and all subdivisions of the interpeduncular nucleus, except for the caudal part. In the pons, the strongest labeling was seen in the nucleus incertus and in the tegmental nucleus. Expressed in bone marrow-derived mast cells (at protein level).

It localises to the cytoplasmic vesicle. The protein resides in the secretory vesicle membrane. Its subcellular location is the secretory vesicle. It is found in the synaptic vesicle membrane. The enzyme catalyses spermine(in) + n H(+)(out) = spermine(out) + n H(+)(in). The catalysed reaction is spermidine(in) + n H(+)(out) = spermidine(out) + n H(+)(in). It carries out the reaction serotonin(in) + n H(+)(out) = serotonin(out) + n H(+)(in). In terms of biological role, proton-coupled polyamine antiporter involved in the translocation of polyamines from cytosol into secretory vesicles prior to their release via exocytosis. Uses the electrochemical proton gradient generated by a V-type proton-pumping ATPase to couple the efflux of protons with the uptake of a polyamine molecule. Facilitates vesicular storage of spermine and spermidine in astrocytes with an impact on glutamatergic neuronal transmission and memory formation. Upon antigen stimulation, regulates polyamine accumulation and release in mast cell secretory granules, which in turn potentiates mast cell degranulation and histamine secretion. The protein is MFS-type transporter SLC18B1 of Mus musculus (Mouse).